The chain runs to 541 residues: Chaperonin GroEL (541 aa).

ATP is bound by residues 29 to 32 (TLGP), 86 to 90 (DGTTT), Gly413, 478 to 480 (NAL), and Asp494.

This sequence belongs to the chaperonin (HSP60) family. Forms a cylinder of 14 subunits composed of two heptameric rings stacked back-to-back. Interacts with the co-chaperonin GroES.

Its subcellular location is the cytoplasm. It catalyses the reaction ATP + H2O + a folded polypeptide = ADP + phosphate + an unfolded polypeptide.. In terms of biological role, together with its co-chaperonin GroES, plays an essential role in assisting protein folding. The GroEL-GroES system forms a nano-cage that allows encapsulation of the non-native substrate proteins and provides a physical environment optimized to promote and accelerate protein folding. The protein is Chaperonin GroEL of Lachnoclostridium phytofermentans (strain ATCC 700394 / DSM 18823 / ISDg) (Clostridium phytofermentans).